An 88-amino-acid chain; its full sequence is Arminin 1a (88 aa).

The signal sequence occupies residues Met-1 to Ala-18. Positions Glu-19–Ala-57 are excised as a propeptide. Val-85 bears the Valine amide mark.

The protein belongs to the arminin family. As to expression, expressed in entodermal epithelium along the body column.

The protein resides in the secreted. Its subcellular location is the target cell membrane. Its function is as follows. Antimicrobial peptide with a broad-spectrum antimicrobial activity. Shows very strong bactericidal activity against B.megaterium (MBC=0.1 uM), E.coli (MBC=0.2 uM), S.aureus (MBC=0.4 uM), methicillin-resistant S.aureus (MRSA) (MBC=0.4-0.8 uM), vancomycin-resistant enterococci (VRE) (E.faecalis (MBC=1.6 uM), and E.faecium (MBC=0.4-0.8 uM)), and extended-spectrum beta-lactamase (ESBL)-producing enterobacteriaceae strains (K.pneumoniae (MBC=0.4-0.8 uM), E.coli (MBC=0.2-0.4 uM)). Keeps its antibacterial activity under a wide range of salt concentrations that mimic physiological conditions of human blood, which is surprising, since Hydra is an obligate freshwater animal with nearly no salt tolerance. Does not affect red blood cells. This Hydra vulgaris (Hydra) protein is Arminin 1a.